A 90-amino-acid polypeptide reads, in one-letter code: Probable Fe(2+)-trafficking protein (90 aa).

It belongs to the Fe(2+)-trafficking protein family. In terms of assembly, monomer.

Could be a mediator in iron transactions between iron acquisition and iron-requiring processes, such as synthesis and/or repair of Fe-S clusters in biosynthetic enzymes. The sequence is that of Probable Fe(2+)-trafficking protein from Proteus mirabilis (strain HI4320).